Here is a 422-residue protein sequence, read N- to C-terminus: Anhydromevalonate phosphate decarboxylase (422 aa).

Mn(2+) is bound by residues N134 and E197. The Proton acceptor role is filled by D244.

This sequence belongs to the UbiD family. It depends on prenylated FMN as a cofactor. The cofactor is Mn(2+).

It catalyses the reaction (2E)-3-methyl-5-phosphooxypent-2-enoate + H(+) = isopentenyl phosphate + CO2. It participates in isoprenoid biosynthesis; isopentenyl diphosphate biosynthesis via mevalonate pathway. Functionally, catalyzes the conversion of trans-anhydromevalonate 5-phosphate (tAHMP) into isopentenyl phosphate. Involved in the archaeal mevalonate (MVA) pathway, which provides fundamental precursors for isoprenoid biosynthesis, such as isopentenyl diphosphate (IPP) and dimethylallyl diphosphate (DMAPP). The polypeptide is Anhydromevalonate phosphate decarboxylase (Methanosarcina mazei (strain ATCC BAA-159 / DSM 3647 / Goe1 / Go1 / JCM 11833 / OCM 88) (Methanosarcina frisia)).